The chain runs to 437 residues: Na(+)/H(+) antiporter NhaA (437 aa).

The next 11 membrane-spanning stretches (helical) occupy residues 12–32 (SMNI…AVIA), 65–85 (LTMI…MVGL), 103–123 (ALPF…YSMV), 133–153 (GLAI…SLLG), 162–182 (IFLT…IAIF), 186–206 (HVAY…YFIG), 214–234 (IFFL…GIHS), 308–328 (GAVN…VMFS), 333–353 (VIGG…FLGI), 377–397 (ISGV…IANL), and 412–432 (LGVL…LHWV).

This sequence belongs to the NhaA Na(+)/H(+) (TC 2.A.33) antiporter family.

It is found in the cell inner membrane. It catalyses the reaction Na(+)(in) + 2 H(+)(out) = Na(+)(out) + 2 H(+)(in). Na(+)/H(+) antiporter that extrudes sodium in exchange for external protons. The chain is Na(+)/H(+) antiporter NhaA from Bacteroides fragilis (strain ATCC 25285 / DSM 2151 / CCUG 4856 / JCM 11019 / LMG 10263 / NCTC 9343 / Onslow / VPI 2553 / EN-2).